A 211-amino-acid polypeptide reads, in one-letter code: Protein-methionine-sulfoxide reductase heme-binding subunit MsrQ (211 aa).

5 helical membrane-spanning segments follow: residues 45-65 (HFTG…TPLA), 82-102 (LWCF…ELGV), 116-136 (PYLT…FTST), 153-173 (FVYL…KIIS), and 178-198 (IYAG…LSLF).

It belongs to the MsrQ family. In terms of assembly, heterodimer of a catalytic subunit (MsrP) and a heme-binding subunit (MsrQ). FMN serves as cofactor. It depends on heme b as a cofactor.

Its subcellular location is the cell inner membrane. Functionally, part of the MsrPQ system that repairs oxidized periplasmic proteins containing methionine sulfoxide residues (Met-O), using respiratory chain electrons. Thus protects these proteins from oxidative-stress damage caused by reactive species of oxygen and chlorine generated by the host defense mechanisms. MsrPQ is essential for the maintenance of envelope integrity under bleach stress, rescuing a wide series of structurally unrelated periplasmic proteins from methionine oxidation, including the primary periplasmic chaperone SurA and the lipoprotein Pal. MsrQ provides electrons for reduction to the reductase catalytic subunit MsrP, using the quinone pool of the respiratory chain. The polypeptide is Protein-methionine-sulfoxide reductase heme-binding subunit MsrQ (Escherichia coli O127:H6 (strain E2348/69 / EPEC)).